We begin with the raw amino-acid sequence, 668 residues long: Methionine--tRNA ligase (668 aa).

Positions 11 to 21 match the 'HIGH' region motif; that stretch reads AYTNGPLHIGH. Cys146, Cys149, Cys159, and Cys162 together coordinate Zn(2+). The 'KMSKS' region motif lies at 332-336; the sequence is KMSTS. Thr335 lines the ATP pocket. One can recognise a tRNA-binding domain in the interval 567 to 668; sequence EFNRLDLRVG…REVEPGERIR (102 aa).

Belongs to the class-I aminoacyl-tRNA synthetase family. MetG type 1 subfamily. In terms of assembly, homodimer. Requires Zn(2+) as cofactor.

It is found in the cytoplasm. The enzyme catalyses tRNA(Met) + L-methionine + ATP = L-methionyl-tRNA(Met) + AMP + diphosphate. Its function is as follows. Is required not only for elongation of protein synthesis but also for the initiation of all mRNA translation through initiator tRNA(fMet) aminoacylation. This is Methionine--tRNA ligase from Methanopyrus kandleri (strain AV19 / DSM 6324 / JCM 9639 / NBRC 100938).